The sequence spans 37 residues: Ferredoxin--NADP reductase, chloroplastic (37 aa).

NADP(+) is bound by residues Ser-3 and 24 to 25 (SR).

It belongs to the ferredoxin--NADP reductase type 1 family. It depends on FAD as a cofactor.

Its subcellular location is the plastid. The protein resides in the chloroplast stroma. It is found in the chloroplast thylakoid membrane. The enzyme catalyses 2 reduced [2Fe-2S]-[ferredoxin] + NADP(+) + H(+) = 2 oxidized [2Fe-2S]-[ferredoxin] + NADPH. The protein operates within energy metabolism; photosynthesis. May play a key role in regulating the relative amounts of cyclic and non-cyclic electron flow to meet the demands of the plant for ATP and reducing power. The protein is Ferredoxin--NADP reductase, chloroplastic of Imperata cylindrica (Cogon grass).